Reading from the N-terminus, the 88-residue chain is Small ribosomal subunit protein uS17 (88 aa).

Belongs to the universal ribosomal protein uS17 family. As to quaternary structure, part of the 30S ribosomal subunit.

One of the primary rRNA binding proteins, it binds specifically to the 5'-end of 16S ribosomal RNA. The sequence is that of Small ribosomal subunit protein uS17 from Pseudomonas entomophila (strain L48).